The sequence spans 391 residues: Digeranylgeranylglycerophospholipid reductase (391 aa).

Gly13, Glu32, Cys43, Ala44, Gly46, Arg97, Ala121, Asp277, Gly289, and Ile290 together coordinate FAD.

Belongs to the geranylgeranyl reductase family. DGGGPL reductase subfamily. FAD serves as cofactor.

The catalysed reaction is a 2,3-bis-O-phytanyl-sn-glycerol 1-phospholipid + 8 oxidized 2[4Fe-4S]-[ferredoxin] = a 2,3-bis-O-(geranylgeranyl)-sn-glycerol 1-phospholipid + 8 reduced 2[4Fe-4S]-[ferredoxin] + 16 H(+). It carries out the reaction 2,3-bis-O-(phytanyl)-sn-glycerol 1-phosphate + 8 oxidized 2[4Fe-4S]-[ferredoxin] = 2,3-bis-O-(geranylgeranyl)-sn-glycerol 1-phosphate + 8 reduced 2[4Fe-4S]-[ferredoxin] + 16 H(+). It catalyses the reaction a 2,3-bis-O-phytanyl-sn-glycerol 1-phospholipid + 8 A = a 2,3-bis-O-(geranylgeranyl)-sn-glycerol 1-phospholipid + 8 AH2. The enzyme catalyses CDP-2,3-bis-O-(geranylgeranyl)-sn-glycerol + 8 AH2 = CDP-2,3-bis-O-(phytanyl)-sn-glycerol + 8 A. The catalysed reaction is archaetidylserine + 8 AH2 = 2,3-bis-O-phytanyl-sn-glycero-3-phospho-L-serine + 8 A. The protein operates within membrane lipid metabolism; glycerophospholipid metabolism. Functionally, is involved in the reduction of 2,3-digeranylgeranylglycerophospholipids (unsaturated archaeols) into 2,3-diphytanylglycerophospholipids (saturated archaeols) in the biosynthesis of archaeal membrane lipids. Catalyzes the formation of archaetidic acid (2,3-di-O-phytanyl-sn-glyceryl phosphate) from 2,3-di-O-geranylgeranylglyceryl phosphate (DGGGP) via the hydrogenation of each double bond of the isoprenoid chains. Is also probably able to reduce double bonds of geranyl groups in CDP-2,3-bis-O-(geranylgeranyl)-sn-glycerol and archaetidylserine, thus acting at various stages in the biosynthesis of archaeal membrane lipids. This Methanothrix thermoacetophila (strain DSM 6194 / JCM 14653 / NBRC 101360 / PT) (Methanosaeta thermophila) protein is Digeranylgeranylglycerophospholipid reductase.